The chain runs to 25 residues: Alpha-lytic protease (25 aa).

This sequence belongs to the peptidase S1 family.

It catalyses the reaction Preferential cleavage: Ala-|-Xaa, Val-|-Xaa in bacterial cell walls, elastin and other proteins.. The sequence is that of Alpha-lytic protease from Achromobacter lyticus.